The sequence spans 752 residues: Phosphoribosylformylglycinamidine synthase subunit PurL (752 aa).

Residue His58 is part of the active site. Residues Tyr61 and Lys103 each coordinate ATP. Mg(2+) is bound at residue Glu105. Substrate contacts are provided by residues 106–109 (SHNH) and Arg128. Catalysis depends on His107, which acts as the Proton acceptor. Asp129 contributes to the Mg(2+) binding site. Residue Gln253 coordinates substrate. Mg(2+) is bound at residue Asp281. Residue 325-327 (ESQ) coordinates substrate. ATP-binding residues include Asp513 and Gly550. Mg(2+) is bound at residue Asn551. Ser553 is a substrate binding site.

It belongs to the FGAMS family. Monomer. Part of the FGAM synthase complex composed of 1 PurL, 1 PurQ and 2 PurS subunits.

The protein localises to the cytoplasm. The catalysed reaction is N(2)-formyl-N(1)-(5-phospho-beta-D-ribosyl)glycinamide + L-glutamine + ATP + H2O = 2-formamido-N(1)-(5-O-phospho-beta-D-ribosyl)acetamidine + L-glutamate + ADP + phosphate + H(+). Its pathway is purine metabolism; IMP biosynthesis via de novo pathway; 5-amino-1-(5-phospho-D-ribosyl)imidazole from N(2)-formyl-N(1)-(5-phospho-D-ribosyl)glycinamide: step 1/2. Its function is as follows. Part of the phosphoribosylformylglycinamidine synthase complex involved in the purines biosynthetic pathway. Catalyzes the ATP-dependent conversion of formylglycinamide ribonucleotide (FGAR) and glutamine to yield formylglycinamidine ribonucleotide (FGAM) and glutamate. The FGAM synthase complex is composed of three subunits. PurQ produces an ammonia molecule by converting glutamine to glutamate. PurL transfers the ammonia molecule to FGAR to form FGAM in an ATP-dependent manner. PurS interacts with PurQ and PurL and is thought to assist in the transfer of the ammonia molecule from PurQ to PurL. This Streptomyces avermitilis (strain ATCC 31267 / DSM 46492 / JCM 5070 / NBRC 14893 / NCIMB 12804 / NRRL 8165 / MA-4680) protein is Phosphoribosylformylglycinamidine synthase subunit PurL.